A 410-amino-acid polypeptide reads, in one-letter code: Peptidase T (410 aa).

Residue H79 participates in Zn(2+) binding. D81 is an active-site residue. D142 serves as a coordination point for Zn(2+). Residue E176 is the Proton acceptor of the active site. Residues E177, D199, and H381 each coordinate Zn(2+).

Belongs to the peptidase M20B family. It depends on Zn(2+) as a cofactor.

Its subcellular location is the cytoplasm. The enzyme catalyses Release of the N-terminal residue from a tripeptide.. Its function is as follows. Cleaves the N-terminal amino acid of tripeptides. This Listeria monocytogenes serotype 4a (strain HCC23) protein is Peptidase T.